Reading from the N-terminus, the 514-residue chain is Na(+)/H(+) antiporter NhaB (514 aa).

Transmembrane regions (helical) follow at residues 23–43, 63–83, 97–117, 120–140, 144–164, 202–222, 238–258, 303–323, 357–377, 391–411, 447–467, and 475–495; these read LALL…PFVA, PLLP…TSAA, LLLM…LFIF, LLLS…AAAF, FLDA…FYGI, LMMH…VGEP, FFLR…LTCM, AVIG…VGLI, LTVF…APII, LFYL…VGTI, ATPN…APLI, and VWMA…CVEF.

Belongs to the NhaB Na(+)/H(+) (TC 2.A.34) antiporter family.

It localises to the cell inner membrane. It carries out the reaction 2 Na(+)(in) + 3 H(+)(out) = 2 Na(+)(out) + 3 H(+)(in). Na(+)/H(+) antiporter that extrudes sodium in exchange for external protons. This Salmonella paratyphi A (strain ATCC 9150 / SARB42) protein is Na(+)/H(+) antiporter NhaB.